Here is a 430-residue protein sequence, read N- to C-terminus: Enolase (430 aa).

Gln-168 serves as a coordination point for (2R)-2-phosphoglycerate. Residue Glu-210 is the Proton donor of the active site. Residues Asp-247, Glu-288, and Asp-315 each coordinate Mg(2+). (2R)-2-phosphoglycerate contacts are provided by Lys-340, Arg-369, Ser-370, and Lys-391. Lys-340 (proton acceptor) is an active-site residue.

This sequence belongs to the enolase family. Requires Mg(2+) as cofactor.

The protein localises to the cytoplasm. Its subcellular location is the secreted. It is found in the cell surface. The enzyme catalyses (2R)-2-phosphoglycerate = phosphoenolpyruvate + H2O. It functions in the pathway carbohydrate degradation; glycolysis; pyruvate from D-glyceraldehyde 3-phosphate: step 4/5. Its function is as follows. Catalyzes the reversible conversion of 2-phosphoglycerate (2-PG) into phosphoenolpyruvate (PEP). It is essential for the degradation of carbohydrates via glycolysis. This chain is Enolase, found in Rippkaea orientalis (strain PCC 8801 / RF-1) (Cyanothece sp. (strain PCC 8801)).